The following is a 512-amino-acid chain: Glutathione-binding protein GsiB (512 aa).

Residues Met-1–Ala-26 form the signal peptide.

Belongs to the bacterial solute-binding protein 5 family. The complex is composed of two ATP-binding proteins (GsiA), two transmembrane proteins (GsiC and GsiD) and a solute-binding protein (GsiB).

The protein localises to the periplasm. In terms of biological role, part of the ABC transporter complex GsiABCD involved in glutathione import. Binds glutathione. This chain is Glutathione-binding protein GsiB, found in Salmonella choleraesuis (strain SC-B67).